The sequence spans 163 residues: Phospholipase A2 homolog 3 (163 aa).

The first 43 residues, 1–43 (MARGGSFSRLRLRAGVVVAAAAAALLLFAVVAPPAAALNIGLQ), serve as a signal peptide directing secretion. 6 cysteine pairs are disulfide-bonded: cysteine 55-cysteine 83, cysteine 59-cysteine 89, cysteine 64-cysteine 137, cysteine 76-cysteine 96, cysteine 95-cysteine 121, and cysteine 102-cysteine 114. Ca(2+) is bound by residues tyrosine 75, glycine 77, and tyrosine 80. Histidine 99 is a catalytic residue. Aspartate 100 contacts Ca(2+).

The protein belongs to the phospholipase A2 family. The cofactor is Ca(2+).

It is found in the secreted. It carries out the reaction a 1,2-diacyl-sn-glycero-3-phosphocholine + H2O = a 1-acyl-sn-glycero-3-phosphocholine + a fatty acid + H(+). Inhibited by EGTA. Its function is as follows. PA2 catalyzes the calcium-dependent hydrolysis of the 2-acyl groups in 3-sn-phosphoglycerides. Releases lysophospholipids (LPLs) and free fatty acids (FFAs) from membrane phospholipids in response to hormones and other external stimuli. The polypeptide is Phospholipase A2 homolog 3 (PLA2-III) (Oryza sativa subsp. japonica (Rice)).